Consider the following 142-residue polypeptide: Dromaiocalcin-1 (142 aa).

Cystine bridges form between Cys-13-Cys-24, Cys-41-Cys-138, and Cys-113-Cys-130. Positions 20–139 (FRGNCYGYFR…CGERNAFICK (120 aa)) constitute a C-type lectin domain.

It localises to the secreted. The protein localises to the extracellular space. Its subcellular location is the extracellular matrix. This chain is Dromaiocalcin-1, found in Dromaius novaehollandiae (Emu).